Consider the following 255-residue polypeptide: Imidazole glycerol phosphate synthase subunit HisF (255 aa).

Active-site residues include Asp12 and Asp131.

This sequence belongs to the HisA/HisF family. As to quaternary structure, heterodimer of HisH and HisF.

It is found in the cytoplasm. The enzyme catalyses 5-[(5-phospho-1-deoxy-D-ribulos-1-ylimino)methylamino]-1-(5-phospho-beta-D-ribosyl)imidazole-4-carboxamide + L-glutamine = D-erythro-1-(imidazol-4-yl)glycerol 3-phosphate + 5-amino-1-(5-phospho-beta-D-ribosyl)imidazole-4-carboxamide + L-glutamate + H(+). The protein operates within amino-acid biosynthesis; L-histidine biosynthesis; L-histidine from 5-phospho-alpha-D-ribose 1-diphosphate: step 5/9. In terms of biological role, IGPS catalyzes the conversion of PRFAR and glutamine to IGP, AICAR and glutamate. The HisF subunit catalyzes the cyclization activity that produces IGP and AICAR from PRFAR using the ammonia provided by the HisH subunit. This is Imidazole glycerol phosphate synthase subunit HisF from Neisseria meningitidis serogroup C (strain 053442).